The following is a 426-amino-acid chain: Gamma-glutamyl phosphate reductase (426 aa).

The protein belongs to the gamma-glutamyl phosphate reductase family.

Its subcellular location is the cytoplasm. It carries out the reaction L-glutamate 5-semialdehyde + phosphate + NADP(+) = L-glutamyl 5-phosphate + NADPH + H(+). Its pathway is amino-acid biosynthesis; L-proline biosynthesis; L-glutamate 5-semialdehyde from L-glutamate: step 2/2. Its function is as follows. Catalyzes the NADPH-dependent reduction of L-glutamate 5-phosphate into L-glutamate 5-semialdehyde and phosphate. The product spontaneously undergoes cyclization to form 1-pyrroline-5-carboxylate. In Cupriavidus taiwanensis (strain DSM 17343 / BCRC 17206 / CCUG 44338 / CIP 107171 / LMG 19424 / R1) (Ralstonia taiwanensis (strain LMG 19424)), this protein is Gamma-glutamyl phosphate reductase.